We begin with the raw amino-acid sequence, 512 residues long: Zinc finger CCCH-type with G patch domain-containing protein (512 aa).

The segment at 159–186 (QEMVPCAYFLEGDCKFNDEMCRFSHGEL) adopts a C3H1-type zinc-finger fold. The tract at residues 255–280 (LEGDDVPSSDSESNSDSDEENEDDVV) is disordered. Acidic residues predominate over residues 256–279 (EGDDVPSSDSESNSDSDEENEDDV). The G-patch domain maps to 308–354 (TKGIGSKIMLKMGYVVGAGLGSKGEGIVVPVSAQVLPQGRSLDYCMQ). Residues 407 to 417 (SSNGSSSSSGS) show a composition bias toward low complexity. The tract at residues 407–432 (SSNGSSSSSGSKKPAAKDNQMDLPSC) is disordered.

The protein localises to the nucleus. Transcription repressor. The chain is Zinc finger CCCH-type with G patch domain-containing protein from Aedes aegypti (Yellowfever mosquito).